The chain runs to 727 residues: MLRIPVRKALVGLSKSPKGCVRTTATAASNLIEVFVDGQSVMVEPGTTVLQACEKVGMQIPRFCYHERLSVAGNCRMCLVEIEKAPKVVAACAMPVMKGWNILTNSEKSKKAREGVMEFLLANHPLDCPICDQGGECDLQDQSMMFGNDRSRFLEGKRAVEDKNIGPLVKTIMTRCIQCTRCIRFASEIAGVDDLGTTGRGNDMQVGTYIEKMFMSELSGNIIDICPVGALTSKPYAFTARPWETRKTESIDVMDAVGSNIVVSTRTGEVMRILPRMHEDINEXWISDKTRFAYDGLKRQRLTEPMVRNEKGLLTYTSWEDALSRVAGMLQSFQGKDVAAIAGGLVDAEALVALKDLLNRVDSDTLCTEEVFPTAGAGTDLRSNYLLNTTIAGVEEADVVLLVGTNPRFEAPLFNARIRKSWLHNDLKVALIGSPVDLTYTYDHLGDSPKILQDIASGSHPFSQVLKEAKKPMVVLGSSALQRNDGAAILAAVSSIAQKIRMTSGVTGDWKVMNILHRIASQVAALDLGYKPGVEAIRKNPPKVLFLLGADGGCITRQDLPKDCFIIYQGHHGDVGAPIADVILPGAAYTEKSATYVNTEGRAQQTKVAVTPPGLAREDWKIIRALSEIAGMTLPYDTLDQVRNRLEEVSPNLVRYDDIEGANYFQQANELSKLVNQQLLADPLVPPQLTIKDFYMTDSISRASQTMAKCVKAVTEGAQAVEEPSIC.

The transit peptide at 1-23 (MLRIPVRKALVGLSKSPKGCVRT) directs the protein to the mitochondrion. The 2Fe-2S ferredoxin-type domain occupies 30–108 (NLIEVFVDGQ…GWNILTNSEK (79 aa)). 3 residues coordinate [2Fe-2S] cluster: Cys-64, Cys-75, and Cys-78. Lys-84 bears the N6-acetyllysine mark. Cys-92 contacts [2Fe-2S] cluster. Residues 108-147 (KSKKAREGVMEFLLANHPLDCPICDQGGECDLQDQSMMFG) enclose the 4Fe-4S His(Cys)3-ligated-type domain. 8 residues coordinate [4Fe-4S] cluster: His-124, Cys-128, Cys-131, Cys-137, Cys-176, Cys-179, Cys-182, and Cys-226. One can recognise a 4Fe-4S Mo/W bis-MGD-type domain in the interval 245–301 (TRKTESIDVMDAVGSNIVVSTRTGEVMRILPRMHEDINEXWISDKTRFAYDGLKRQR). An N6-acetyllysine mark is found at Lys-467, Lys-499, and Lys-709.

Belongs to the complex I 75 kDa subunit family. Core subunit of respiratory chain NADH dehydrogenase (Complex I) which is composed of 45 different subunits. This is the largest subunit of complex I and it is a component of the iron-sulfur (IP) fragment of the enzyme. Complex I associates with ubiquinol-cytochrome reductase complex (Complex III) to form supercomplexes. Interacts with MDM2 and AKAP1. It depends on [2Fe-2S] cluster as a cofactor. [4Fe-4S] cluster is required as a cofactor.

Its subcellular location is the mitochondrion inner membrane. It carries out the reaction a ubiquinone + NADH + 5 H(+)(in) = a ubiquinol + NAD(+) + 4 H(+)(out). Functionally, core subunit of the mitochondrial membrane respiratory chain NADH dehydrogenase (Complex I) which catalyzes electron transfer from NADH through the respiratory chain, using ubiquinone as an electron acceptor. Essential for catalysing the entry and efficient transfer of electrons within complex I. Plays a key role in the assembly and stability of complex I and participates in the association of complex I with ubiquinol-cytochrome reductase complex (Complex III) to form supercomplexes. The sequence is that of NADH-ubiquinone oxidoreductase 75 kDa subunit, mitochondrial (NDUFS1) from Gorilla gorilla gorilla (Western lowland gorilla).